Consider the following 180-residue polypeptide: Protein Flattop (180 aa).

Residues 111-180 (PQISGKASGK…AGDKVLQAQS (70 aa)) are disordered.

It belongs to the Flattop family.

It is found in the cytoplasm. Its subcellular location is the cytoskeleton. The protein resides in the cilium basal body. The protein localises to the cell projection. It localises to the cilium. It is found in the apical cell membrane. Its subcellular location is the cilium axoneme. In terms of biological role, microtubule inner protein (MIP) part of the dynein-decorated doublet microtubules (DMTs) in cilia axoneme. Acts as a regulator of cilium basal body docking and positioning in mono- and multiciliated cells. Regulates basal body docking and cilia formation in multiciliated lung cells. Regulates kinocilium positioning and stereocilia bundle morphogenesis in the inner ear. This Xenopus laevis (African clawed frog) protein is Protein Flattop.